Reading from the N-terminus, the 321-residue chain is 4-hydroxy-3-methylbut-2-enyl diphosphate reductase (321 aa).

Cys-12 provides a ligand contact to [4Fe-4S] cluster. His-41 and His-74 together coordinate (2E)-4-hydroxy-3-methylbut-2-enyl diphosphate. Residues His-41 and His-74 each contribute to the dimethylallyl diphosphate site. Positions 41 and 74 each coordinate isopentenyl diphosphate. Residue Cys-96 coordinates [4Fe-4S] cluster. His-124 serves as a coordination point for (2E)-4-hydroxy-3-methylbut-2-enyl diphosphate. His-124 provides a ligand contact to dimethylallyl diphosphate. Residue His-124 coordinates isopentenyl diphosphate. Residue Glu-126 is the Proton donor of the active site. Thr-167 provides a ligand contact to (2E)-4-hydroxy-3-methylbut-2-enyl diphosphate. Position 197 (Cys-197) interacts with [4Fe-4S] cluster. Residues Ser-225, Ser-226, Asn-227, and Ser-269 each contribute to the (2E)-4-hydroxy-3-methylbut-2-enyl diphosphate site. Positions 225, 226, 227, and 269 each coordinate dimethylallyl diphosphate. Isopentenyl diphosphate is bound by residues Ser-225, Ser-226, Asn-227, and Ser-269.

The protein belongs to the IspH family. Homodimer. [4Fe-4S] cluster is required as a cofactor.

The enzyme catalyses isopentenyl diphosphate + 2 oxidized [2Fe-2S]-[ferredoxin] + H2O = (2E)-4-hydroxy-3-methylbut-2-enyl diphosphate + 2 reduced [2Fe-2S]-[ferredoxin] + 2 H(+). The catalysed reaction is dimethylallyl diphosphate + 2 oxidized [2Fe-2S]-[ferredoxin] + H2O = (2E)-4-hydroxy-3-methylbut-2-enyl diphosphate + 2 reduced [2Fe-2S]-[ferredoxin] + 2 H(+). The protein operates within isoprenoid biosynthesis; dimethylallyl diphosphate biosynthesis; dimethylallyl diphosphate from (2E)-4-hydroxy-3-methylbutenyl diphosphate: step 1/1. It functions in the pathway isoprenoid biosynthesis; isopentenyl diphosphate biosynthesis via DXP pathway; isopentenyl diphosphate from 1-deoxy-D-xylulose 5-phosphate: step 6/6. In terms of biological role, catalyzes the conversion of 1-hydroxy-2-methyl-2-(E)-butenyl 4-diphosphate (HMBPP) into a mixture of isopentenyl diphosphate (IPP) and dimethylallyl diphosphate (DMAPP). Acts in the terminal step of the DOXP/MEP pathway for isoprenoid precursor biosynthesis. This is 4-hydroxy-3-methylbut-2-enyl diphosphate reductase from Escherichia coli O6:K15:H31 (strain 536 / UPEC).